The chain runs to 158 residues: MGRFLLVTLSLLVGAFSLNEANSCCCPQDWLPKNGFCYKVFNDHKNWNDAEMFCRKFKPGCHLASIHSNADSADLAEYVSDYLKSDGNVWIGLNDPRKQRTWVWSDRSPTNYYSWNRGEPNNSKNNEYCVHLWALSGYLKWNDTPCKALYSFICQCRF.

The signal sequence occupies residues 1 to 23; it reads MGRFLLVTLSLLVGAFSLNEANS. Intrachain disulfides connect C26-C37, C54-C154, C61-C156, and C129-C146. In terms of domain architecture, C-type lectin spans 33–155; the sequence is KNGFCYKVFN…CKALYSFICQ (123 aa). The short motif at 119 to 121 is the Mannose-binding element; that stretch reads EPN. N121 carries N-linked (GlcNAc...) asparagine glycosylation. The Ca(2+) site is built by E127, N142, and D143.

The protein belongs to the true venom lectin family. As to quaternary structure, dimer. Probably disulfide-linked homodimer. In terms of tissue distribution, expressed by the venom gland.

The protein localises to the secreted. Functionally, mannose-binding lectin that binds to and agglutinates rabbit (but not human) erythrocytes in a calcium-dependent manner. This Oxyuranus scutellatus (Coastal taipan) protein is C-type lectin mannose-binding isoform.